Reading from the N-terminus, the 738-residue chain is Glycogen [starch] synthase, muscle (738 aa).

S8 is modified (phosphoserine; by AMPK and PKA). Residue S11 is modified to Phosphoserine. UDP is bound at residue K39. Positions 205 and 211 each coordinate UDP-alpha-D-glucose. 5 residues coordinate alpha-D-glucose 6-phosphate: H291, E292, Q294, H297, and K301. R331 serves as a coordination point for UDP. R331 lines the UDP-alpha-D-glucose pocket. Position 412 is a phosphoserine (S412). Position 501 (H501) interacts with alpha-D-glucose 6-phosphate. Residues E510, W512, and G513 each contribute to the UDP-alpha-D-glucose site. T515 serves as a coordination point for UDP. Residues R582 and R586 each contribute to the alpha-D-glucose 6-phosphate site. Residues 632-738 (QGYRYPRPAS…PTSSLGEERN (107 aa)) form a disordered region. S641 is modified (phosphoserine; by DYRK2, GSK3-alpha, GSK3-beta and PASK). 6 positions are modified to phosphoserine: S645, S649, S652, S653, S657, and S672. Positions 658–681 (EDEEEPRDGPLGEDSERYDEEEEA) are enriched in acidic residues. Residues 682–695 (AKDRRNIRAPEWPR) show a composition bias toward basic and acidic residues. Residues S698, S709, and S711 each carry the phosphoserine modification. Residues 698 to 738 (SCSSSTGGSKRSNSVDTGPSSSLSTPTEPLSPTSSLGEERN) show a composition bias toward low complexity. Phosphothreonine occurs at positions 722 and 724. A phosphoserine mark is found at S728 and S732.

It belongs to the glycosyltransferase 3 family. As to quaternary structure, part of the GYS1-GYG1 complex, a heterooctamer composed of a tetramer of GYS1 and 2 dimers of GYG1, where each GYS1 protomer binds to one GYG1 subunit (via GYG1 C-terminus); the GYS1 tetramer may dissociate from GYG1 dimers to continue glycogen polymerization on its own. Post-translationally, primed phosphorylation at Ser-657 (site 5) by CSNK2A1 and CSNK2A2 is required for inhibitory phosphorylation at Ser-641 (site 3a), Ser-645 (site 3b), Ser-649 (site 3c) and Ser-653 (site 4) by GSK3A an GSK3B. Phosphorylated at Ser-641 by PASK, leading to inactivation; phosphorylation by PASK is inhibited by glycogen. Phosphorylated at Ser-641 by DYRK2, leading to inactivation. Dephosphorylation at Ser-641 and Ser-645 by PP1 activates the enzyme. Phosphorylation at Ser-8 by AMPK inactivates the enzyme activity.

The catalysed reaction is [(1-&gt;4)-alpha-D-glucosyl](n) + UDP-alpha-D-glucose = [(1-&gt;4)-alpha-D-glucosyl](n+1) + UDP + H(+). The protein operates within glycan biosynthesis; glycogen biosynthesis. With respect to regulation, allosteric activation by glucose-6-phosphate. Phosphorylation reduces the activity towards UDP-glucose. When in the non-phosphorylated state, glycogen synthase does not require glucose-6-phosphate as an allosteric activator; when phosphorylated it does. Its function is as follows. Glycogen synthase participates in the glycogen biosynthetic process along with glycogenin and glycogen branching enzyme. Extends the primer composed of a few glucose units formed by glycogenin by adding new glucose units to it. In this context, glycogen synthase transfers the glycosyl residue from UDP-Glc to the non-reducing end of alpha-1,4-glucan. The chain is Glycogen [starch] synthase, muscle (Gys1) from Mus musculus (Mouse).